The following is a 179-amino-acid chain: Large ribosomal subunit protein uL5 (179 aa).

Belongs to the universal ribosomal protein uL5 family. In terms of assembly, part of the 50S ribosomal subunit; part of the 5S rRNA/L5/L18/L25 subcomplex. Contacts the 5S rRNA and the P site tRNA. Forms a bridge to the 30S subunit in the 70S ribosome.

This is one of the proteins that bind and probably mediate the attachment of the 5S RNA into the large ribosomal subunit, where it forms part of the central protuberance. In the 70S ribosome it contacts protein S13 of the 30S subunit (bridge B1b), connecting the 2 subunits; this bridge is implicated in subunit movement. Contacts the P site tRNA; the 5S rRNA and some of its associated proteins might help stabilize positioning of ribosome-bound tRNAs. This Synechococcus elongatus (strain ATCC 33912 / PCC 7942 / FACHB-805) (Anacystis nidulans R2) protein is Large ribosomal subunit protein uL5.